A 426-amino-acid chain; its full sequence is Serine--tRNA ligase (426 aa).

Residues 1–15 (MIDVKDLSENPDKFR) show a composition bias toward basic and acidic residues. A disordered region spans residues 1–22 (MIDVKDLSENPDKFRASQRARG). Position 228–230 (228–230 (TSE)) interacts with L-serine. Residues 259-261 (RRE) and Val-275 contribute to the ATP site. Position 282 (Glu-282) interacts with L-serine. 346–349 (ELTS) provides a ligand contact to ATP. Residue Thr-386 participates in L-serine binding.

Belongs to the class-II aminoacyl-tRNA synthetase family. Type-1 seryl-tRNA synthetase subfamily. In terms of assembly, homodimer. The tRNA molecule binds across the dimer.

The protein resides in the cytoplasm. The catalysed reaction is tRNA(Ser) + L-serine + ATP = L-seryl-tRNA(Ser) + AMP + diphosphate + H(+). It catalyses the reaction tRNA(Sec) + L-serine + ATP = L-seryl-tRNA(Sec) + AMP + diphosphate + H(+). The protein operates within aminoacyl-tRNA biosynthesis; selenocysteinyl-tRNA(Sec) biosynthesis; L-seryl-tRNA(Sec) from L-serine and tRNA(Sec): step 1/1. Functionally, catalyzes the attachment of serine to tRNA(Ser). Is also able to aminoacylate tRNA(Sec) with serine, to form the misacylated tRNA L-seryl-tRNA(Sec), which will be further converted into selenocysteinyl-tRNA(Sec). The sequence is that of Serine--tRNA ligase from Pseudarthrobacter chlorophenolicus (strain ATCC 700700 / DSM 12829 / CIP 107037 / JCM 12360 / KCTC 9906 / NCIMB 13794 / A6) (Arthrobacter chlorophenolicus).